Consider the following 543-residue polypeptide: Malate synthase (543 aa).

The Proton acceptor role is filled by R162. The Proton donor role is filled by D449.

Belongs to the malate synthase family.

It catalyses the reaction glyoxylate + acetyl-CoA + H2O = (S)-malate + CoA + H(+). Its pathway is carbohydrate metabolism; glyoxylate cycle; (S)-malate from isocitrate: step 2/2. This chain is Malate synthase (masA), found in Dictyostelium discoideum (Social amoeba).